The primary structure comprises 401 residues: Elongation factor Tu (401 aa).

A tr-type G domain is found at 10-211; sequence KPHLNIGTIG…AVDTYVPNPT (202 aa). The tract at residues 19-26 is G1; sequence GHVDHGKT. A GTP-binding site is contributed by 19-26; it reads GHVDHGKT. Thr26 contributes to the Mg(2+) binding site. The interval 62-66 is G2; sequence GITIA. The G3 stretch occupies residues 83 to 86; it reads DCPG. GTP contacts are provided by residues 83-87 and 138-141; these read DCPGH and NKAD. Residues 138-141 are G4; that stretch reads NKAD. A G5 region spans residues 179–181; that stretch reads SAL.

It belongs to the TRAFAC class translation factor GTPase superfamily. Classic translation factor GTPase family. EF-Tu/EF-1A subfamily. As to quaternary structure, monomer.

Its subcellular location is the cytoplasm. The catalysed reaction is GTP + H2O = GDP + phosphate + H(+). Its function is as follows. GTP hydrolase that promotes the GTP-dependent binding of aminoacyl-tRNA to the A-site of ribosomes during protein biosynthesis. This Leptospira biflexa serovar Patoc (strain Patoc 1 / Ames) protein is Elongation factor Tu.